Consider the following 352-residue polypeptide: C-C chemokine receptor type 5 (352 aa).

The Extracellular segment spans residues M1–A30. A Sulfotyrosine modification is found at Y3. S6 and S7 each carry an O-linked (GalNAc...) serine glycan. 2 positions are modified to sulfotyrosine: Y10 and Y14. Disulfide bonds link C20–C269 and C101–C178. Residues H31–C58 traverse the membrane as a helical segment. Residues K59 to Y68 are Cytoplasmic-facing. The helical transmembrane segment at L69 to Y89 threads the bilayer. Over A90 to Q102 the chain is Extracellular. Residues F103–I124 form a helical membrane-spanning segment. The Cytoplasmic portion of the chain corresponds to D125–T141. The helical transmembrane segment at V142–F166 threads the bilayer. Residues T167–M198 are Extracellular-facing. The chain crosses the membrane as a helical span at residues V199 to L218. Topologically, residues K219–R235 are cytoplasmic. A helical membrane pass occupies residues L236–Y260. Over Q261–Q277 the chain is Extracellular. Residues A278–G301 form a helical membrane-spanning segment. The Cytoplasmic segment spans residues E302–L352. Residues C321, C323, and C324 are each lipidated (S-palmitoyl cysteine). Phosphoserine; by BARK1 is present on residues S337, S342, and S349.

It belongs to the G-protein coupled receptor 1 family. As to quaternary structure, interacts with PRAF2. Efficient ligand binding to CCL3/MIP-1alpha and CCL4/MIP-1beta requires sulfation, O-glycosylation and sialic acid modifications. Glycosylation on Ser-6 is required for efficient binding of CCL4. Interacts with GRK2. Interacts with ARRB1 and ARRB2. Interacts with CNIH4. Interacts with S100A4; this interaction stimulates T-lymphocyte chemotaxis. Post-translationally, sulfated on at least 2 of the N-terminal tyrosines. Sulfation is required for efficient binding of the chemokines, CCL3 and CCL4. Palmitoylation in the C-terminal is important for cell surface expression. In terms of processing, phosphorylation on serine residues in the C-terminal is stimulated by binding CC chemokines especially by APO-RANTES. Post-translationally, O-glycosylated, but not N-glycosylated. Ser-6 appears to be the major site even if Ser-7 may be also O-glycosylated. Also sialylated glycans present which contribute to chemokine binding. Ser-17 may also be glycosylated and, if so, with small moieties such as a T-antigen.

The protein localises to the cell membrane. Receptor for a number of inflammatory CC-chemokines including CCL3/MIP-1-alpha, CCL4/MIP-1-beta and RANTES and subsequently transduces a signal by increasing the intracellular calcium ion level. May play a role in the control of granulocytic lineage proliferation or differentiation. Participates in T-lymphocyte migration to the infection site by acting as a chemotactic receptor. The chain is C-C chemokine receptor type 5 (CCR5) from Mico humeralifer (Black and white tassel-ear marmoset).